A 140-amino-acid chain; its full sequence is Small ribosomal subunit protein uS12 (140 aa).

The tract at residues 1-44 is disordered; that stretch reads MPTFNQLVRKGRKTMEKNSQAPALQKGFNSLRKKTTDASAPQKR. Position 102 is a 3-methylthioaspartic acid (D102). The tract at residues 120-140 is disordered; the sequence is VAKRRQARSKYGAKRPKEAKK. The span at 121-140 shows a compositional bias: basic residues; it reads AKRRQARSKYGAKRPKEAKK.

Belongs to the universal ribosomal protein uS12 family. As to quaternary structure, part of the 30S ribosomal subunit. Contacts proteins S8 and S17. May interact with IF1 in the 30S initiation complex.

Its function is as follows. With S4 and S5 plays an important role in translational accuracy. Interacts with and stabilizes bases of the 16S rRNA that are involved in tRNA selection in the A site and with the mRNA backbone. Located at the interface of the 30S and 50S subunits, it traverses the body of the 30S subunit contacting proteins on the other side and probably holding the rRNA structure together. The combined cluster of proteins S8, S12 and S17 appears to hold together the shoulder and platform of the 30S subunit. This Lachnoclostridium phytofermentans (strain ATCC 700394 / DSM 18823 / ISDg) (Clostridium phytofermentans) protein is Small ribosomal subunit protein uS12.